The primary structure comprises 744 residues: Tripartite motif-containing protein 2 (744 aa).

The residue at position 10 (S10) is a Phosphoserine. The RING-type zinc finger occupies 23–64; sequence CSICLERYKNPKVLPCLHTFCERCLQNYIPAHSLTLSCPVCR. The B box-type zinc finger occupies 113-154; sequence GKPLSCPNHDGNVMEFYCQSCETAMCRECTEGEHAEHPTVPL. Zn(2+) is bound by residues C118, H121, C141, and H146. The stretch at 320-421 is one Filamin repeat; sequence TTNAVASETV…IRGSPFKLKV (102 aa). T371 bears the Phosphothreonine mark. 3 positions are modified to phosphoserine: S375, S424, and S428. The segment at 432-462 is disordered; sequence EGVKRRVKSPGSGHVKQKAVKRPASMYSTGK. 6 NHL repeats span residues 473–516, 520–563, 564–605, 609–652, 656–699, and 700–743; these read IFRV…FSND, KSRF…FSSD, GKFK…FQPN, VTRF…FNQE, MLKF…FDGS, and GSFL…YRYL.

It belongs to the TRIM/RBCC family. As to quaternary structure, forms homooligomers. Interacts with TRIM3; this interaction reduces TRIM2 activity. Interacts with myosin V; myosin V may not be a substrate for ubiquitination. Interacts with NEFL. Interacts with phosphorylated BCL2L11. Interacts with SIRPA. In terms of processing, RING-type zinc finger-dependent and UBE2D1-dependent autoubiquitination.

It is found in the cytoplasm. It carries out the reaction S-ubiquitinyl-[E2 ubiquitin-conjugating enzyme]-L-cysteine + [acceptor protein]-L-lysine = [E2 ubiquitin-conjugating enzyme]-L-cysteine + N(6)-ubiquitinyl-[acceptor protein]-L-lysine.. It participates in protein modification; protein ubiquitination. In terms of biological role, UBE2D1-dependent E3 ubiquitin-protein ligase that mediates the ubiquitination of NEFL and of phosphorylated BCL2L11. Plays a neuroprotective function. May play a role in neuronal rapid ischemic tolerance. Plays a role in antiviral immunity and limits New World arenavirus infection independently of its ubiquitin ligase activity. This chain is Tripartite motif-containing protein 2 (TRIM2), found in Callithrix jacchus (White-tufted-ear marmoset).